A 249-amino-acid polypeptide reads, in one-letter code: Phycobilisome 27.9 kDa linker polypeptide, phycoerythrin-associated, rod (249 aa).

The PBS-linker domain occupies 2–166; the sequence is ASQTILELWP…LDRGPAQIDS (165 aa). One can recognise a CpcD-like domain in the interval 198–248; sequence EKRFKILVQGSKFDSPRRISTTEYIVPASKMTPQIQRINRTSGKIVSITEI.

This sequence belongs to the phycobilisome linker protein family. As to quaternary structure, the phycobilisome is a hemidiscoidal structure that is composed of two distinct substructures: a core complex and six rods radiating from the core.

Its subcellular location is the cellular thylakoid membrane. Its function is as follows. Rod linker protein, associated with phycoerythrin. Linker polypeptides determine the state of aggregation and the location of the disk-shaped phycobiliprotein units within the phycobilisome and modulate their spectroscopic properties in order to mediate a directed and optimal energy transfer. This chain is Phycobilisome 27.9 kDa linker polypeptide, phycoerythrin-associated, rod (cpeD), found in Microchaete diplosiphon (Fremyella diplosiphon).